The primary structure comprises 395 residues: Acetate kinase (395 aa).

Asparagine 8 is a Mg(2+) binding site. Lysine 15 is a binding site for ATP. Arginine 89 serves as a coordination point for substrate. Aspartate 146 acts as the Proton donor/acceptor in catalysis. ATP-binding positions include 206-210, 281-283, and 329-333; these read HLGNG, DLR, and GIGEN. Glutamate 382 serves as a coordination point for Mg(2+).

Belongs to the acetokinase family. Homodimer. The cofactor is Mg(2+). It depends on Mn(2+) as a cofactor.

It localises to the cytoplasm. It carries out the reaction acetate + ATP = acetyl phosphate + ADP. It functions in the pathway metabolic intermediate biosynthesis; acetyl-CoA biosynthesis; acetyl-CoA from acetate: step 1/2. Its function is as follows. Catalyzes the formation of acetyl phosphate from acetate and ATP. Can also catalyze the reverse reaction. This chain is Acetate kinase, found in Bacillus velezensis (strain DSM 23117 / BGSC 10A6 / LMG 26770 / FZB42) (Bacillus amyloliquefaciens subsp. plantarum).